Reading from the N-terminus, the 258-residue chain is Phosphate import ATP-binding protein PstB (258 aa).

Residues 5-247 (LDLKGVNIYY…EKIFSNPSQK (243 aa)) form the ABC transporter domain. 37–44 (GPSGCGKT) serves as a coordination point for ATP.

Belongs to the ABC transporter superfamily. Phosphate importer (TC 3.A.1.7) family. The complex is composed of two ATP-binding proteins (PstB), two transmembrane proteins (PstC and PstA) and a solute-binding protein (PstS).

It is found in the cell membrane. The enzyme catalyses phosphate(out) + ATP + H2O = ADP + 2 phosphate(in) + H(+). Part of the ABC transporter complex PstSACB involved in phosphate import. Responsible for energy coupling to the transport system. This Mycolicibacterium paratuberculosis (strain ATCC BAA-968 / K-10) (Mycobacterium paratuberculosis) protein is Phosphate import ATP-binding protein PstB.